Consider the following 331-residue polypeptide: Protein-methionine-sulfoxide reductase catalytic subunit MsrP (331 aa).

The tat-type signal signal peptide spans Met1 to Ala54. Mo-molybdopterin-binding positions include Asn86, Tyr89–Glu90, Cys144, Ser179, Asn227, Arg232, and Ser243–Lys245.

The protein belongs to the MsrP family. In terms of assembly, heterodimer of a catalytic subunit (MsrP) and a heme-binding subunit (MsrQ). It depends on Mo-molybdopterin as a cofactor. In terms of processing, predicted to be exported by the Tat system. The position of the signal peptide cleavage has not been experimentally proven.

The protein resides in the periplasm. The enzyme catalyses L-methionyl-[protein] + a quinone + H2O = L-methionyl-(S)-S-oxide-[protein] + a quinol. The catalysed reaction is L-methionyl-[protein] + a quinone + H2O = L-methionyl-(R)-S-oxide-[protein] + a quinol. In terms of biological role, part of the MsrPQ system that repairs oxidized periplasmic proteins containing methionine sulfoxide residues (Met-O), using respiratory chain electrons. Thus protects these proteins from oxidative-stress damage caused by reactive species of oxygen and chlorine generated by the host defense mechanisms. MsrPQ is essential for the maintenance of envelope integrity under bleach stress, rescuing a wide series of structurally unrelated periplasmic proteins from methionine oxidation. The catalytic subunit MsrP is non-stereospecific, being able to reduce both (R-) and (S-) diastereoisomers of methionine sulfoxide. The protein is Protein-methionine-sulfoxide reductase catalytic subunit MsrP of Ralstonia nicotianae (strain ATCC BAA-1114 / GMI1000) (Ralstonia solanacearum).